The sequence spans 188 residues: Achaete-scute homolog 5 (188 aa).

Positions 80–93 (AFIQKRNERERQRV) are basic motif. The bHLH domain occupies 80 to 132 (AFIQKRNERERQRVKCVNEGYARLRGHLPGALTEKRLSKVETLRAAIRYIKYL). The segment at 94–132 (KCVNEGYARLRGHLPGALTEKRLSKVETLRAAIRYIKYL) is helix-loop-helix motif. The tract at residues 139–188 (TPDGAPPPATSPPPAHTGHSNVPQPSSLVAESSGSPFSSSPFLESEEPSL) is disordered. A compositionally biased stretch (pro residues) spans 142 to 153 (GAPPPATSPPPA). The span at 158–168 (SNVPQPSSLVA) shows a compositional bias: polar residues. Over residues 169–181 (ESSGSPFSSSPFL) the composition is skewed to low complexity.

Interacts with transcription factor TCF3/E12. As to expression, expressed in teeth (at protein level).

It localises to the nucleus. Transcription factor. Probably binds E-box motifs 5'-CANNTG-3' in complex with transcription factor TCF3/E12. Negatively modulates transcription of target genes such as CDH1/E-cadherin, perhaps by recruiting the PRC2 repressive complex to regulatory elements. Regulates ameloblast development and tooth germ growth, perhaps acting by positively modulating migration of inner enamel epithelium (IEE) cells. Plays a role in enamel formation. The polypeptide is Achaete-scute homolog 5 (Mus musculus (Mouse)).